The primary structure comprises 419 residues: Carboxypeptidase A1 (419 aa).

Positions 1 to 16 are cleaved as a signal peptide; it reads MQGLLILSVLLGAALG. Residues 17–110 constitute a propeptide, activation peptide; the sequence is KEDFVGHQVL…QEQMFASQSR (94 aa). The Peptidase M14 domain occupies 121–414; the sequence is TYHTLDEIYD…LGVLTIMEHT (294 aa). Residues histidine 179 and glutamate 182 each coordinate Zn(2+). Substrate contacts are provided by residues 179-182, arginine 237, and 254-255; these read HSRE and NR. Cysteine 248 and cysteine 271 are oxidised to a cystine. Position 306 (histidine 306) interacts with Zn(2+). Substrate contacts are provided by residues 307–308 and tyrosine 358; that span reads SY. Glutamate 380 serves as the catalytic Proton donor/acceptor.

This sequence belongs to the peptidase M14 family. As to quaternary structure, monomer. May form a complex with proelastase 2. The cofactor is Zn(2+). Pancreas.

The protein resides in the secreted. The catalysed reaction is Release of a C-terminal amino acid, but little or no action with -Asp, -Glu, -Arg, -Lys or -Pro.. It catalyses the reaction leukotriene C4 + H2O = leukotriene F4 + glycine. With respect to regulation, inhibited by interaction with the S.magnifica carboxypeptidase inhibitor SmCI. Carboxypeptidase that catalyzes the release of a C-terminal amino acid, but has little or no action with -Asp, -Glu, -Arg, -Lys or -Pro. Catalyzes the conversion of leukotriene C4 to leukotriene F4 via the hydrolysis of an amide bond. The chain is Carboxypeptidase A1 (CPA1) from Bos taurus (Bovine).